The primary structure comprises 179 residues: Large ribosomal subunit protein uL6 (179 aa).

The protein belongs to the universal ribosomal protein uL6 family. As to quaternary structure, part of the 50S ribosomal subunit.

In terms of biological role, this protein binds to the 23S rRNA, and is important in its secondary structure. It is located near the subunit interface in the base of the L7/L12 stalk, and near the tRNA binding site of the peptidyltransferase center. This chain is Large ribosomal subunit protein uL6, found in Clostridium novyi (strain NT).